The chain runs to 334 residues: Replication factor C small subunit (334 aa).

49–56 (GPPGVGKT) contributes to the ATP binding site.

Belongs to the activator 1 small subunits family. RfcS subfamily. In terms of assembly, heteromultimer composed of small subunits (RfcS) and large subunits (RfcL).

Functionally, part of the RFC clamp loader complex which loads the PCNA sliding clamp onto DNA. The protein is Replication factor C small subunit of Methanosarcina barkeri (strain Fusaro / DSM 804).